The sequence spans 499 residues: MELSYQEKLTLIKLNELKRAKFEELVKATGLEQVAVMRAVLGLQAKGLAKLHERSEKVVKLTETGKKYAEIGLPEWRALKLLRERGKVTLDDLREVLSDDELKPIVGLLRKEGWASVRKEDGKLILEITEKGLEAEERPIDRALKLLAEKNVVPVKEIEKLIPVKELKRRKIGEEETVTERTVEITPAGEELAPKVELKREVSVLTPELIKSGKWREVEFRRFDIKAPVRRIYPGKKQPYRAFLDKIRRRLIEMGFIEMTVDSLIETQFWNFDALFQPQNHPAREWTDTYQLKYPKSGFLPEEELVERVKTAHERGLAGSRGWGYVWSPERAMLLMPRAHGTALSGRQLAKGVEIPGKYFTIQRVFRPDVLDRTHLIEFNQIDGFVVGEELNFRHLLGILKRFAVEIAGAKKVKFLPDYYPFTEPSVQMSAYHPELGWVEFGGAGIFREEMTKALGIEVPVIAWGIGIDRLAMFKLGIDDIRYLFSYDLRWLREAKLVW.

L-phenylalanine-binding positions include T342, 381–383 (QID), and F422. E424 provides a ligand contact to Mg(2+). F447 contributes to the L-phenylalanine binding site.

It belongs to the class-II aminoacyl-tRNA synthetase family. Phe-tRNA synthetase alpha subunit type 2 subfamily. In terms of assembly, tetramer of two alpha and two beta subunits. Mg(2+) serves as cofactor.

It localises to the cytoplasm. The catalysed reaction is tRNA(Phe) + L-phenylalanine + ATP = L-phenylalanyl-tRNA(Phe) + AMP + diphosphate + H(+). The polypeptide is Phenylalanine--tRNA ligase alpha subunit (Thermococcus gammatolerans (strain DSM 15229 / JCM 11827 / EJ3)).